A 218-amino-acid chain; its full sequence is Phosphatidylserine decarboxylase proenzyme (218 aa).

Serine 187 functions as the Schiff-base intermediate with substrate; via pyruvic acid in the catalytic mechanism. Serine 187 carries the post-translational modification Pyruvic acid (Ser); by autocatalysis.

Belongs to the phosphatidylserine decarboxylase family. PSD-A subfamily. Heterodimer of a large membrane-associated beta subunit and a small pyruvoyl-containing alpha subunit. It depends on pyruvate as a cofactor. Is synthesized initially as an inactive proenzyme. Formation of the active enzyme involves a self-maturation process in which the active site pyruvoyl group is generated from an internal serine residue via an autocatalytic post-translational modification. Two non-identical subunits are generated from the proenzyme in this reaction, and the pyruvate is formed at the N-terminus of the alpha chain, which is derived from the carboxyl end of the proenzyme. The post-translation cleavage follows an unusual pathway, termed non-hydrolytic serinolysis, in which the side chain hydroxyl group of the serine supplies its oxygen atom to form the C-terminus of the beta chain, while the remainder of the serine residue undergoes an oxidative deamination to produce ammonia and the pyruvoyl prosthetic group on the alpha chain.

The protein localises to the cell membrane. The enzyme catalyses a 1,2-diacyl-sn-glycero-3-phospho-L-serine + H(+) = a 1,2-diacyl-sn-glycero-3-phosphoethanolamine + CO2. The protein operates within phospholipid metabolism; phosphatidylethanolamine biosynthesis; phosphatidylethanolamine from CDP-diacylglycerol: step 2/2. In terms of biological role, catalyzes the formation of phosphatidylethanolamine (PtdEtn) from phosphatidylserine (PtdSer). The sequence is that of Phosphatidylserine decarboxylase proenzyme from Geobacter metallireducens (strain ATCC 53774 / DSM 7210 / GS-15).